The primary structure comprises 89 residues: Acylphosphatase (89 aa).

The 86-residue stretch at 3–88 folds into the Acylphosphatase-like domain; it reads TLHLQIEGRV…GEYSGFEKRS (86 aa). Catalysis depends on residues Arg18 and Asn36.

This sequence belongs to the acylphosphatase family.

The enzyme catalyses an acyl phosphate + H2O = a carboxylate + phosphate + H(+). The polypeptide is Acylphosphatase (acyP) (Thiobacillus denitrificans (strain ATCC 25259 / T1)).